Reading from the N-terminus, the 906-residue chain is Protein translocase subunit SecA (906 aa).

Residues Gln-87, 105–109 (GEGKT), and Asp-512 each bind ATP. The disordered stretch occupies residues 879–906 (REGEKIGRNDPCPCGSGQKYKQCHGKLS). 4 residues coordinate Zn(2+): Cys-890, Cys-892, Cys-901, and His-902.

The protein belongs to the SecA family. As to quaternary structure, monomer and homodimer. Part of the essential Sec protein translocation apparatus which comprises SecA, SecYEG and auxiliary proteins SecDF-YajC and YidC. Zn(2+) serves as cofactor.

It localises to the cell inner membrane. It is found in the cytoplasm. The enzyme catalyses ATP + H2O + cellular proteinSide 1 = ADP + phosphate + cellular proteinSide 2.. Its function is as follows. Part of the Sec protein translocase complex. Interacts with the SecYEG preprotein conducting channel. Has a central role in coupling the hydrolysis of ATP to the transfer of proteins into and across the cell membrane, serving both as a receptor for the preprotein-SecB complex and as an ATP-driven molecular motor driving the stepwise translocation of polypeptide chains across the membrane. The polypeptide is Protein translocase subunit SecA (Shewanella frigidimarina (strain NCIMB 400)).